The primary structure comprises 96 residues: Toxin ParE1 (96 aa).

It belongs to the RelE toxin family. In terms of assembly, forms a ParD1(2)-ParE1(2) heterotetramer.

Functionally, toxic component of a type II toxin-antitoxin (TA) system. Its toxic effect is neutralized by coexpression with cognate antitoxin ParD1 but no other ParD or RelB antitoxin. Low levels of wild-type toxin in the absence of antitoxin decreases the rate of cell growth, and results in death or loss of colony formation abilities and greatly elongated cells. Low levels of a mutant missing the last 4 residues leads to loss of cell division while cell elongation continues. In Caulobacter vibrioides (strain ATCC 19089 / CIP 103742 / CB 15) (Caulobacter crescentus), this protein is Toxin ParE1 (parE1).